A 430-amino-acid chain; its full sequence is Inner membrane transport protein YbaT (430 aa).

Residues 1–14 (MMNTEGNNGNKPLG) lie on the Cytoplasmic side of the membrane. Residues 15–35 (LWNVVSIGIGAMVGAGIFALL) form a helical membrane-spanning segment. At 36–38 (GQA) the chain is on the periplasmic side. A helical membrane pass occupies residues 39-59 (ALLMEASTWVAFAFGGIVAMF). Residues 60–88 (SGYAYARLGASYPSNGGIIDFFRRGLGNG) are Cytoplasmic-facing. The chain crosses the membrane as a helical span at residues 89–109 (VFSLALSLLYLLTLAVSIAMV). At 110–128 (ARAFGAYAVQFLHEGSQEE) the chain is on the periplasmic side. Residues 129–149 (HLILLYALGIIAVMTLFNSLS) form a helical membrane-spanning segment. Topologically, residues 150-157 (NHAVGRLE) are cytoplasmic. Residues 158-178 (VILVGIKMMILLLLIIAGVWS) traverse the membrane as a helical segment. The Periplasmic portion of the chain corresponds to 179-192 (LQPAHISVSAPPSS). A helical transmembrane segment spans residues 193 to 213 (GAFFSCIGITFLAYAGFGMMA). The Cytoplasmic segment spans residues 214–228 (NAADKVKDPQVIMPR). A helical membrane pass occupies residues 229-249 (AFLVAIGVTTLLYISLALVLL). Topologically, residues 250–272 (SDVSALELEKYADTAVAQAASPL) are periplasmic. Residues 273–293 (LGHVGYVIVVIGALLATASAI) form a helical membrane-spanning segment. Residues 294–325 (NANLFAVFNIMDNMGSERELPKLMNKSLWRQS) lie on the Cytoplasmic side of the membrane. A helical membrane pass occupies residues 326–346 (TWGNIIVVVLIMLMTAALNLG). Position 347 (serine 347) is a topological domain, periplasmic. A helical membrane pass occupies residues 348–368 (LASVASATFLICYLAVFVVAI). Topologically, residues 369-379 (RLRHDIHASLP) are cytoplasmic. Residues 380–400 (ILIVGTLVMLLVIVGFIYSLW) form a helical membrane-spanning segment. At 401–403 (SQG) the chain is on the periplasmic side. Residues 404–424 (SRALIWIIGSLLLSLIVAMVM) form a helical membrane-spanning segment. Topologically, residues 425–430 (KRNKTV) are cytoplasmic.

Belongs to the amino acid-polyamine-organocation (APC) superfamily.

It is found in the cell inner membrane. In terms of biological role, probable amino-acid or metabolite transport protein. In Escherichia coli (strain K12), this protein is Inner membrane transport protein YbaT (ybaT).